Here is a 30-residue protein sequence, read N- to C-terminus: Dermaseptin-3.4TR (30 aa).

As to expression, expressed by the skin glands.

It localises to the secreted. Has antimicrobial activity. The polypeptide is Dermaseptin-3.4TR (Phyllomedusa trinitatis (Trinidad leaf frog)).